A 238-amino-acid chain; its full sequence is Opacity protein opA68 (238 aa).

Residue A1 is a signal peptide. Positions 88–109 (NLQRRTSNGNRRDRKTENQENG) are disordered.

This sequence belongs to the opacity porin family.

It localises to the cell outer membrane. In terms of biological role, implicated in a number of adherence functions. OPA proteins are implicated in pathogenesis and are subject to phase variation. The chain is Opacity protein opA68 from Neisseria gonorrhoeae.